Consider the following 158-residue polypeptide: Ribosomal RNA large subunit methyltransferase H (158 aa).

S-adenosyl-L-methionine-binding positions include L73, G107, and 126-131 (FGEITL).

Belongs to the RNA methyltransferase RlmH family. As to quaternary structure, homodimer.

It is found in the cytoplasm. The enzyme catalyses pseudouridine(1915) in 23S rRNA + S-adenosyl-L-methionine = N(3)-methylpseudouridine(1915) in 23S rRNA + S-adenosyl-L-homocysteine + H(+). Specifically methylates the pseudouridine at position 1915 (m3Psi1915) in 23S rRNA. The sequence is that of Ribosomal RNA large subunit methyltransferase H from Rubrobacter xylanophilus (strain DSM 9941 / JCM 11954 / NBRC 16129 / PRD-1).